The chain runs to 143 residues: Large ribosomal subunit protein bL28c (143 aa).

The N-terminal 66 residues, 1-66 (MTTMATQGAW…SFPGIQPIVA (66 aa)), are a transit peptide targeting the chloroplast.

It belongs to the bacterial ribosomal protein bL28 family. In terms of assembly, part of the 50S ribosomal subunit.

The protein resides in the plastid. The protein localises to the chloroplast. This Arabidopsis thaliana (Mouse-ear cress) protein is Large ribosomal subunit protein bL28c (RPL28).